Reading from the N-terminus, the 350-residue chain is Ferredoxin--NADP reductase (350 aa).

7 residues coordinate FAD: D49, Q57, Y62, V102, F136, D303, and T344.

It belongs to the ferredoxin--NADP reductase type 2 family. In terms of assembly, homodimer. Requires FAD as cofactor.

The enzyme catalyses 2 reduced [2Fe-2S]-[ferredoxin] + NADP(+) + H(+) = 2 oxidized [2Fe-2S]-[ferredoxin] + NADPH. The protein is Ferredoxin--NADP reductase of Granulibacter bethesdensis (strain ATCC BAA-1260 / CGDNIH1).